The following is a 488-amino-acid chain: Ergochrome gene cluster transcriptional regulator CPUR_05433 (488 aa).

A disordered region spans residues 1–29 (MDHSIGGRNCQSGGTTASAPRSTGSDEFP). Residues 9–25 (NCQSGGTTASAPRSTGS) are compositionally biased toward polar residues. Residues 36–63 (CHACSLSKVRCSKEKPSCSRCAKRGVPC) constitute a DNA-binding region (zn(2)-C6 fungal-type).

The protein resides in the nucleus. Transcription factor; part of the gene cluster responsible for the typical purple-black color of the ergot sclerotia. The ergochrome gene cluster produces several ergot pigments including the yellow ergochrome secalonic acid and its derivatives, as well as the red anthraquinones endocrocin and clavorubin. This is Ergochrome gene cluster transcriptional regulator CPUR_05433 from Claviceps purpurea (strain 20.1) (Ergot fungus).